Here is a 401-residue protein sequence, read N- to C-terminus: Argininosuccinate synthase (401 aa).

ATP contacts are provided by residues 11–19 (AYSGGLDTS) and Ala-38. Residues Tyr-89 and Ser-94 each coordinate L-citrulline. Gly-119 serves as a coordination point for ATP. L-aspartate contacts are provided by Thr-121, Asn-125, and Asp-126. An L-citrulline-binding site is contributed by Asn-125. L-citrulline is bound by residues Arg-129, Ser-180, Ser-189, Glu-265, and Tyr-277.

This sequence belongs to the argininosuccinate synthase family. Type 1 subfamily. Homotetramer.

The protein resides in the cytoplasm. The enzyme catalyses L-citrulline + L-aspartate + ATP = 2-(N(omega)-L-arginino)succinate + AMP + diphosphate + H(+). The protein operates within amino-acid biosynthesis; L-arginine biosynthesis; L-arginine from L-ornithine and carbamoyl phosphate: step 2/3. The sequence is that of Argininosuccinate synthase from Syntrophus aciditrophicus (strain SB).